An 89-amino-acid chain; its full sequence is Small ribosomal subunit protein bS16 (89 aa).

The protein belongs to the bacterial ribosomal protein bS16 family.

The sequence is that of Small ribosomal subunit protein bS16 from Chloroflexus aurantiacus (strain ATCC 29364 / DSM 637 / Y-400-fl).